Consider the following 360-residue polypeptide: Photosystem II protein D1 2 (360 aa).

3 helical membrane passes run 29–46 (YIGW…SATI), 118–133 (HFLI…EWEF), and 142–156 (WICV…AATA). H118 contacts chlorophyll a. Y126 contributes to the pheophytin a binding site. The [CaMn4O5] cluster site is built by D170 and E189. A helical transmembrane segment spans residues 197 to 218 (LHMFGVAGVFGGSLFAAMHGSL). A chlorophyll a-binding site is contributed by H198. A quinone is bound by residues H215 and 264–265 (SF). H215 provides a ligand contact to Fe cation. H272 contacts Fe cation. The chain crosses the membrane as a helical span at residues 274 to 288 (FLAAWPVIGIWLTSL). Residues H332, E333, D342, and A344 each coordinate [CaMn4O5] cluster. Residues 345–360 (GTESAPVAFAAALGDG) constitute a propeptide that is removed on maturation.

It belongs to the reaction center PufL/M/PsbA/D family. As to quaternary structure, PSII is composed of 1 copy each of membrane proteins PsbA, PsbB, PsbC, PsbD, PsbE, PsbF, PsbH, PsbI, PsbJ, PsbK, PsbL, PsbM, PsbT, PsbX, Psb30/Ycf12, peripheral proteins PsbO, CyanoQ (PsbQ), PsbU, PsbV and a large number of cofactors. It forms dimeric complexes. The D1/D2 heterodimer binds P680, chlorophylls that are the primary electron donor of PSII, and subsequent electron acceptors. It shares a non-heme iron and each subunit binds pheophytin, quinone, additional chlorophylls, carotenoids and lipids. D1 provides most of the ligands for the Mn4-Ca-O5 cluster of the oxygen-evolving complex (OEC). There is also a Cl(-1) ion associated with D1 and D2, which is required for oxygen evolution. The PSII complex binds additional chlorophylls, carotenoids and specific lipids. serves as cofactor. In terms of processing, tyr-161 forms a radical intermediate that is referred to as redox-active TyrZ, YZ or Y-Z. C-terminally processed by CtpA; processing is essential to allow assembly of the oxygen-evolving complex and thus photosynthetic growth.

Its subcellular location is the cell inner membrane. It carries out the reaction 2 a plastoquinone + 4 hnu + 2 H2O = 2 a plastoquinol + O2. Photosystem II (PSII) is a light-driven water:plastoquinone oxidoreductase that uses light energy to abstract electrons from H(2)O, generating O(2) and a proton gradient subsequently used for ATP formation. It consists of a core antenna complex that captures photons, and an electron transfer chain that converts photonic excitation into a charge separation. The D1/D2 (PsbA/PsbD) reaction center heterodimer binds P680, the primary electron donor of PSII as well as several subsequent electron acceptors. The protein is Photosystem II protein D1 2 of Gloeobacter violaceus (strain ATCC 29082 / PCC 7421).